The following is a 538-amino-acid chain: RNA-binding protein Ro60 (538 aa).

An N-acetylmethionine modification is found at methionine 1. Residues serine 4 and serine 19 each carry the phosphoserine modification. Positions 16–369 (VVNSEGGCVW…TFKTVEPTGK (354 aa)) constitute a TROVE domain. Positions 120-284 (RIPTHLFTFI…EMPLTALLRN (165 aa)) are RNA-binding. An N6-acetyllysine modification is found at lysine 224. The interval 361-538 (FKTVEPTGKR…VIRNFTLDVI (178 aa)) is VWFA-like domain. Residues serine 378, serine 380, and threonine 445 each coordinate a divalent metal cation.

This sequence belongs to the Ro 60 kDa family. As to quaternary structure, identified in a IGF2BP1-dependent mRNP granule complex containing untranslated mRNAs. Found in a complex with PUF60 and Y5 RNA. Interacts with RAB11FIP5. Highest in brain, followed by lung, muscle, kidney and heart. Lower levels are found in testis, liver and spleen.

It is found in the cytoplasm. RNA-binding protein that binds to misfolded non-coding RNAs, pre-5S rRNA, and several small cytoplasmic RNA molecules known as Y RNAs. May play roles in cilia formation and/or maintenance. The polypeptide is RNA-binding protein Ro60 (Mus musculus (Mouse)).